A 282-amino-acid polypeptide reads, in one-letter code: Formate channel FocB (282 aa).

Over 1–35 (MRNKLSFDLQLSARKAAIAERIAAHKIARSKVSVF) the chain is Cytoplasmic. Residues 36-56 (LMAMSAGVFMAIGFTFYLSVI) form a helical membrane-spanning segment. At 57–68 (ADAPSSQALTHL) the chain is on the periplasmic side. A helical membrane pass occupies residues 69-89 (VGGLCFTLGFILLAVCGTSLF). Residues 90–112 (TSSVMTVMAKSRGVISWRTWLIN) lie on the Cytoplasmic side of the membrane. Residues 113-133 (ALLVACGNLAGIACFSLLIWF) form a helical membrane-spanning segment. Topologically, residues 134-163 (SGLVMSENAMWGVAVLHCAEGKMHHTFTES) are periplasmic. The helical transmembrane segment at 164 to 184 (VSLGIMCNLMVCLALWMSYCG) threads the bilayer. Over 185-190 (RSLCDK) the chain is Cytoplasmic. The chain crosses the membrane as a helical span at residues 191–211 (IVAMILPITLFVASGFEHCIA). The Periplasmic portion of the chain corresponds to 212-248 (NLFVIPFAIAIRHFAPPPFWQLAHSSADNFPALTVSH). Residues 249–269 (FITANLLPVMLGNIIGGAVLV) traverse the membrane as a helical segment. The Cytoplasmic portion of the chain corresponds to 270–282 (SMCYRAIYLRQEP).

This sequence belongs to the FNT transporter (TC 1.A.16) family.

The protein resides in the cell inner membrane. The enzyme catalyses formate(in) = formate(out). Its activity is regulated as follows. The direction of formate translocation depends on external pH and electron donor source. Its function is as follows. Involved in the bidirectional transport of formate during mixed-acid fermentation. In Escherichia coli (strain K12), this protein is Formate channel FocB.